Here is a 911-residue protein sequence, read N- to C-terminus: Alpha-actinin-4 (911 aa).

An actin-binding region spans residues Met1–Ser269. Residues Gln12 to Gly26 are interaction with VCL. Residues Gln12–Tyr31 are disordered. A compositionally biased stretch (gly residues) spans Ser16–Gly29. A Phosphotyrosine modification is found at Tyr31. Residues Arg40–Asn61 form an interaction with VCL region. Calponin-homology (CH) domains lie at Lys50 to Ala154 and Thr163 to Ser269. The short motif at Leu84–Leu88 is the LXXLL motif element. The interval Lys108–Leu126 is interaction with VCL. Lys114 is modified (N6-acetyllysine). The polyphosphoinositide (PIP2)-binding stretch occupies residues Thr177–Trp192. The residue at position 214 (Lys214) is an N6-acetyllysine. A Phosphothreonine modification is found at Thr249. Spectrin repeat units follow at residues His293–Asn403, His413–Lys518, Gln528–Glu639, and His649–Asn752. Lys592 and Lys625 each carry N6-acetyllysine. Ser696 is subject to Phosphoserine. The tract at residues Trp736–Leu911 is mediates interaction with MICALL2. EF-hand domains are found at residues Glu765 to Asp800 and Gln806 to Asp841. Asp778 is a Ca(2+) binding site. N6-acetyllysine is present on Lys779. Asp780 and Glu789 together coordinate Ca(2+). Lys859 carries the post-translational modification N6-acetyllysine. Ser909 carries the phosphoserine modification.

It belongs to the alpha-actinin family. Homodimer; antiparallel. Interacts with MAGI1. Interacts with MICALL2 (preferentially in opened conformation); stimulated by RAB13 activation. Identified in a IGF2BP1-dependent mRNP granule complex containing untranslated mRNAs. Component of the CART complex, at least composed of ACTN4, HGS/HRS, MYO5B and TRIM3. Binds TRIM3 at the N-terminus. Interacts with PDLIM2. Identified in a complex with CASK, IQGAP1, MAGI2, NPHS1, SPTAN1 and SPTBN1. Interacts with PPARG and RARA. Binds to VCL; this interaction triggers VCL conformational changes. Interacts with SEPTIN14. Interacts with IGSF8. As to expression, expressed in the foot process layer of podocytes in the kidney glomerulus but not in tubules (at protein level).

The protein localises to the nucleus. It is found in the cytoplasm. It localises to the cell junction. The protein resides in the cytoskeleton. Its subcellular location is the stress fiber. The protein localises to the perinuclear region. In terms of biological role, F-actin cross-linking protein which is thought to anchor actin to a variety of intracellular structures. This is a bundling protein. Probably involved in vesicular trafficking via its association with the CART complex. The CART complex is necessary for efficient transferrin receptor recycling but not for EGFR degradation. Involved in tight junction assembly in epithelial cells probably through interaction with MICALL2. Links MICALL2 to the actin cytoskeleton and recruits it to the tight junctions. May also function as a transcriptional coactivator, stimulating transcription mediated by the nuclear hormone receptors PPARG and RARA. Association with IGSF8 regulates the immune synapse formation and is required for efficient T-cell activation. The sequence is that of Alpha-actinin-4 from Rattus norvegicus (Rat).